Consider the following 196-residue polypeptide: ATP-dependent Clp protease proteolytic subunit (196 aa).

The active-site Nucleophile is S101. The active site involves H126.

This sequence belongs to the peptidase S14 family. In terms of assembly, component of the chloroplastic Clp protease core complex.

The protein resides in the plastid. It localises to the chloroplast stroma. The catalysed reaction is Hydrolysis of proteins to small peptides in the presence of ATP and magnesium. alpha-casein is the usual test substrate. In the absence of ATP, only oligopeptides shorter than five residues are hydrolyzed (such as succinyl-Leu-Tyr-|-NHMec, and Leu-Tyr-Leu-|-Tyr-Trp, in which cleavage of the -Tyr-|-Leu- and -Tyr-|-Trp bonds also occurs).. Functionally, cleaves peptides in various proteins in a process that requires ATP hydrolysis. Has a chymotrypsin-like activity. Plays a major role in the degradation of misfolded proteins. The chain is ATP-dependent Clp protease proteolytic subunit from Lepidium virginicum (Virginia pepperweed).